Consider the following 388-residue polypeptide: Lipid-A-disaccharide synthase (388 aa).

It belongs to the LpxB family.

It catalyses the reaction a lipid X + a UDP-2-N,3-O-bis[(3R)-3-hydroxyacyl]-alpha-D-glucosamine = a lipid A disaccharide + UDP + H(+). The protein operates within bacterial outer membrane biogenesis; LPS lipid A biosynthesis. Functionally, condensation of UDP-2,3-diacylglucosamine and 2,3-diacylglucosamine-1-phosphate to form lipid A disaccharide, a precursor of lipid A, a phosphorylated glycolipid that anchors the lipopolysaccharide to the outer membrane of the cell. The sequence is that of Lipid-A-disaccharide synthase from Burkholderia mallei (strain NCTC 10247).